Here is a 310-residue protein sequence, read N- to C-terminus: Carbamate kinase 1 (310 aa).

The protein belongs to the carbamate kinase family.

The protein localises to the cytoplasm. It catalyses the reaction hydrogencarbonate + NH4(+) + ATP = carbamoyl phosphate + ADP + H2O + H(+). It participates in metabolic intermediate metabolism; carbamoyl phosphate degradation; CO(2) and NH(3) from carbamoyl phosphate: step 1/1. The polypeptide is Carbamate kinase 1 (arcC1) (Staphylococcus aureus (strain bovine RF122 / ET3-1)).